We begin with the raw amino-acid sequence, 244 residues long: Cell division protein ZapD (244 aa).

Belongs to the ZapD family. In terms of assembly, interacts with FtsZ.

It localises to the cytoplasm. Functionally, cell division factor that enhances FtsZ-ring assembly. Directly interacts with FtsZ and promotes bundling of FtsZ protofilaments, with a reduction in FtsZ GTPase activity. The protein is Cell division protein ZapD of Shewanella sp. (strain MR-7).